A 79-amino-acid chain; its full sequence is Sec-independent protein translocase protein TatA (79 aa).

A helical membrane pass occupies residues 1–21; it reads MGGFTSIWHWVIVLLVIVLLF. Positions 46-79 are disordered; that stretch reads DDEEEAKNEPKTLDAQATQTKVHETSEIKSKQES. Over residues 66–79 the composition is skewed to basic and acidic residues; sequence KVHETSEIKSKQES.

Belongs to the TatA/E family. The Tat system comprises two distinct complexes: a TatABC complex, containing multiple copies of TatA, TatB and TatC subunits, and a separate TatA complex, containing only TatA subunits. Substrates initially bind to the TatABC complex, which probably triggers association of the separate TatA complex to form the active translocon.

The protein localises to the cell inner membrane. Functionally, part of the twin-arginine translocation (Tat) system that transports large folded proteins containing a characteristic twin-arginine motif in their signal peptide across membranes. TatA could form the protein-conducting channel of the Tat system. The chain is Sec-independent protein translocase protein TatA from Helicobacter pylori (strain HPAG1).